The primary structure comprises 518 residues: Protein nucleotidyltransferase YdiU (518 aa).

The segment covering 1–10 has biased composition (basic and acidic residues); it reads MTHLHFDNRL. A disordered region spans residues 1–25; that stretch reads MTHLHFDNRLRQQLPGDPEEGARRR. Positions 100, 102, 103, 123, 135, 136, 193, and 200 each coordinate ATP. The Proton acceptor role is filled by Asp270. The Mg(2+) site is built by Asn271 and Asp280. Asp280 is an ATP binding site.

It belongs to the SELO family. Mg(2+) is required as a cofactor. It depends on Mn(2+) as a cofactor.

It carries out the reaction L-seryl-[protein] + ATP = 3-O-(5'-adenylyl)-L-seryl-[protein] + diphosphate. The enzyme catalyses L-threonyl-[protein] + ATP = 3-O-(5'-adenylyl)-L-threonyl-[protein] + diphosphate. The catalysed reaction is L-tyrosyl-[protein] + ATP = O-(5'-adenylyl)-L-tyrosyl-[protein] + diphosphate. It catalyses the reaction L-histidyl-[protein] + UTP = N(tele)-(5'-uridylyl)-L-histidyl-[protein] + diphosphate. It carries out the reaction L-seryl-[protein] + UTP = O-(5'-uridylyl)-L-seryl-[protein] + diphosphate. The enzyme catalyses L-tyrosyl-[protein] + UTP = O-(5'-uridylyl)-L-tyrosyl-[protein] + diphosphate. Functionally, nucleotidyltransferase involved in the post-translational modification of proteins. It can catalyze the addition of adenosine monophosphate (AMP) or uridine monophosphate (UMP) to a protein, resulting in modifications known as AMPylation and UMPylation. The sequence is that of Protein nucleotidyltransferase YdiU from Xanthomonas euvesicatoria pv. vesicatoria (strain 85-10) (Xanthomonas campestris pv. vesicatoria).